Consider the following 119-residue polypeptide: Large ribosomal subunit protein bL20 (119 aa).

This sequence belongs to the bacterial ribosomal protein bL20 family.

Its function is as follows. Binds directly to 23S ribosomal RNA and is necessary for the in vitro assembly process of the 50S ribosomal subunit. It is not involved in the protein synthesizing functions of that subunit. In Clostridium kluyveri (strain NBRC 12016), this protein is Large ribosomal subunit protein bL20.